A 209-amino-acid chain; its full sequence is Small ribosomal subunit protein uS4 (209 aa).

In terms of domain architecture, S4 RNA-binding spans 98 to 161 (ARLDNVVYRM…RDLEVIKKAV (64 aa)).

It belongs to the universal ribosomal protein uS4 family. In terms of assembly, part of the 30S ribosomal subunit. Contacts protein S5. The interaction surface between S4 and S5 is involved in control of translational fidelity.

Functionally, one of the primary rRNA binding proteins, it binds directly to 16S rRNA where it nucleates assembly of the body of the 30S subunit. Its function is as follows. With S5 and S12 plays an important role in translational accuracy. The sequence is that of Small ribosomal subunit protein uS4 from Thermotoga petrophila (strain ATCC BAA-488 / DSM 13995 / JCM 10881 / RKU-1).